A 227-amino-acid chain; its full sequence is Probable proteasome subunit beta type-2 (227 aa).

Residues 1–6 constitute a propeptide, removed in mature form; the sequence is MITKTG. The active-site Nucleophile is the Thr-7.

It belongs to the peptidase T1B family. In terms of assembly, the 26S proteasome consists of a 20S proteasome core and two 19S regulatory subunits. The 20S proteasome core is composed of 28 subunits that are arranged in four stacked rings, resulting in a barrel-shaped structure. The two end rings are each formed by seven alpha subunits, and the two central rings are each formed by seven beta subunits. The catalytic chamber with the active sites is on the inside of the barrel.

Its subcellular location is the cytoplasm. The protein localises to the nucleus. It carries out the reaction Cleavage of peptide bonds with very broad specificity.. Functionally, the proteasome degrades poly-ubiquitinated proteins in the cytoplasm and in the nucleus. It is essential for the regulated turnover of proteins and for the removal of misfolded proteins. The proteasome is a multicatalytic proteinase complex that is characterized by its ability to cleave peptides with Arg, Phe, Tyr, Leu, and Glu adjacent to the leaving group at neutral or slightly basic pH. It has an ATP-dependent proteolytic activity. This is Probable proteasome subunit beta type-2 (PUP1) from Encephalitozoon cuniculi (strain GB-M1) (Microsporidian parasite).